Reading from the N-terminus, the 390-residue chain is MDTHIIEEGLVKIEVPDFEKVSAKAPVFYNPVMEMNRDISVAVINQYRKEVDHDISICDAFGGTGIRGARYSKEIHGVEKVVVGDVNPLAVEISKKNMQLNNISNVEVQKNDANILLQSNKGLFDVVDIDPFGTPAMFTQSTAANIRPGGLICISATDTSALCGTYHDPCLRKYGAKPLKTEYCHENGIRILIAFISRNLAVNQKYLHVLFSHSTEHYMRVYAIVKRGGKKTNKALDNIGFIAHCPNCLHRETTYGFAPKIPHTCPECGGEYDVAGPLWLGKIWDKEFIYNTMELVKNLNLNKKDDLMSLFEKCYMEADGPVTFYDIHKICKKLKISSPKINDVMDEIRNRGYFISRTHFKLTGMRTDMPLDELKQLILDIKEDKLGPEK.

The 375-residue stretch at 4–378 (HIIEEGLVKI…MPLDELKQLI (375 aa)) folds into the Trm1 methyltransferase domain. S-adenosyl-L-methionine is bound by residues Arg37, Arg67, Asp85, Asp112, and Ala113. Positions 245, 248, 265, and 268 each coordinate Zn(2+).

It belongs to the class I-like SAM-binding methyltransferase superfamily. Trm1 family.

It carries out the reaction guanosine(26) in tRNA + 2 S-adenosyl-L-methionine = N(2)-dimethylguanosine(26) in tRNA + 2 S-adenosyl-L-homocysteine + 2 H(+). Functionally, dimethylates a single guanine residue at position 26 of a number of tRNAs using S-adenosyl-L-methionine as donor of the methyl groups. The polypeptide is tRNA (guanine(26)-N(2))-dimethyltransferase (Methanosphaera stadtmanae (strain ATCC 43021 / DSM 3091 / JCM 11832 / MCB-3)).